Consider the following 318-residue polypeptide: 2-methyl-6-phytyl-1,4-hydroquinone methyltransferase (318 aa).

Residues 1–39 form the signal peptide; it reads MPEYLLLPAGLISLSLAIAAGLYLLTARGYQSSDSVANA. The interval 97-106 is SAM motif I; the sequence is VLDVGCGIGG. Residues 157 to 165 form an SAM motif II region; it reads GSFDVVWSV. Positions 184–193 are SAM motif III; that stretch reads VVKPGGILVV.

Belongs to the class I-like SAM-binding methyltransferase superfamily. gTMT family.

It carries out the reaction 2-methyl-6-phytyl-1,4-benzene-1,4-diol + S-adenosyl-L-methionine = 2,3-dimethyl-6-phytylbenzene-1,4-diol + S-adenosyl-L-homocysteine + H(+). The catalysed reaction is 2-methyl-6-(all-trans-nonaprenyl)benzene-1,4-diol + S-adenosyl-L-methionine = plastoquinol-9 + S-adenosyl-L-homocysteine + H(+). It catalyses the reaction 6-geranylgeranyl-2-methylbenzene-1,4-diol + S-adenosyl-L-methionine = 6-geranylgeranyl-2,3-dimethylbenzene-1,4-diol + S-adenosyl-L-homocysteine + H(+). The protein operates within cofactor biosynthesis; tocopherol biosynthesis. Its function is as follows. Involved in a key methylation step in both tocopherol (vitamin E) and plastoquinone synthesis. Catalyzes the conversion of 2-methyl-6-phytyl-1,4-hydroquinol (MPBQ) to 2,3-dimethyl-6-phytyl-1,4-hydroquinol (DMPQ, a substrate for tocopherol cyclase), and 2-methyl-6-solanyl-1,4-benzoquinol (MSBQ) to plastoquinol. In Synechocystis sp. (strain ATCC 27184 / PCC 6803 / Kazusa), this protein is 2-methyl-6-phytyl-1,4-hydroquinone methyltransferase.